The chain runs to 1115 residues: PAN2-PAN3 deadenylation complex catalytic subunit PAN2 (1115 aa).

WD repeat units lie at residues 27-66 (NRDK…YTRY), 112-153 (AAFS…GCLD), 155-194 (LLNY…TIKS), 197-236 (AHSA…YDLR), and 295-334 (HPCQ…MGMF). The linker stretch occupies residues 337–473 (TPEMLAYPDY…IQTYTSINKY (137 aa)). The USP domain maps to 474–855 (EVPPAYSRLP…TPEIIIYCDA (382 aa)). Cys-660, His-662, Cys-713, and Cys-716 together coordinate Zn(2+). The Exonuclease domain occupies 907-1079 (VAIDAEFVSL…EDAHTALILY (173 aa)). Positions 910, 912, 1020, and 1071 each coordinate a divalent metal cation.

The protein belongs to the peptidase C19 family. PAN2 subfamily. As to quaternary structure, forms a heterotrimer with an asymmetric homodimer of the regulatory subunit PAN3 to form the poly(A)-nuclease (PAN) deadenylation complex. Requires a divalent metal cation as cofactor.

The protein localises to the cytoplasm. It carries out the reaction Exonucleolytic cleavage of poly(A) to 5'-AMP.. With respect to regulation, positively regulated by the regulatory subunit PAN3. Negatively regulated by PAB1-binding protein PBP1. Inhibited under stress conditions. Inhibition of deadenylation under stress increases mRNA stability, which may be a mechanism to retain the majority of the cytoplasmic pool of mRNAs for later reuse and recovery from stress. Its function is as follows. Catalytic subunit of the poly(A)-nuclease (PAN) deadenylation complex, one of two cytoplasmic mRNA deadenylases involved in mRNA turnover. PAN specifically shortens poly(A) tails of RNA and the activity is stimulated by poly(A)-binding protein PAB1. PAN deadenylation is followed by rapid degradation of the shortened mRNA tails by the CCR4-NOT complex. Deadenylated mRNAs are then degraded by two alternative mechanisms, namely exosome-mediated 3'-5' exonucleolytic degradation, or deadenylation-dependent mRNA decaping by DCP1-DCP2 and subsequent 5'-3' exonucleolytic degradation by XRN1. May also be involved in post-transcriptional maturation of mRNA poly(A) tails, trimming the tails from their synthesized length to the slightly shorter, apparently messenger-specific length found on newly exported mRNAs. PAN cooperates with protein kinase DUN1 in the regulation of RAD5 mRNA levels and cell survival in response to replicational stress. The chain is PAN2-PAN3 deadenylation complex catalytic subunit PAN2 from Saccharomyces cerevisiae (strain ATCC 204508 / S288c) (Baker's yeast).